The primary structure comprises 179 residues: uncharacterized protein (179 aa).

The signal sequence occupies residues 1-26; that stretch reads MKKNMILFFGILKKLLICILKMEIKC.

This is an uncharacterized protein from Acheta domesticus (House cricket).